The chain runs to 540 residues: FAD-binding monooxygenase lolF2 (540 aa).

FAD contacts are provided by residues 43–46 and 55–58; these read VWRE and DSLF. NADP(+) contacts are provided by residues 53 to 55, 182 to 188, and 205 to 206; these read AVD, TGPSGVQ, and QS.

Belongs to the FAD-binding monooxygenase family. FAD serves as cofactor.

The protein operates within alkaloid biosynthesis. In terms of biological role, FAD-binding monooxygenase; part of the gene cluster that mediates the biosynthesis of loline alkaloids, potent insecticidal agents composed of a pyrrolizidine ring system and an uncommon ether bridge linking carbons 2 and 7. Lolines are structurally differentiated by the various modifications of the L-amino group and include norloline, loline, N-methylloline, N-acetylloline, N-acetylnorloline, and N-formylloline. The first committed step is the condensation of O-acetyl-L-homoserine (derived from L-aspartic acid) and L-proline, probably catalyzed by the gamma-type pyridoxal 5'-phosphate(PLP)-dependent enzyme lolC, to give the diamino diacid, NACPP. Ensuing cyclization, decarboxylation, and acetylation steps yield 1-exo-acetamidopyrrolizidine (AcAP). LolO is required for installation of the ether bridge upon the pathway intermediate, 1-exo-acetamidopyrrolizidine (AcAP). In sequential 2-oxoglutarate- and O(2)-consuming steps, lolO removes hydrogens from C2 and C7 of AcAP to form both carbon-oxygen bonds in N-acetylnorloline (NANL), the precursor to all other lolines. The enzymes lolD, lolE, lolF and lolT have also been proposed to be involved in the ether-bridge installation. Further processing of the exocyclic moiety of NANL by fungal N-acetamidase (LolN), methyltransferase (LolM), and cytochrome P450 (LolP) enzymes, with occasional involvement of a plant acetyltransferase, generates the other known lolines. LolN transforms NANL to norlonine which is monomethylated and dimethylated to respectively lonine and N-methyllonine (NML) by lolM. LolP catalyzes hydroxylation of the methyl group in N-methylloline (NML) and further oxygenation to N-formylloline (NFL). A plant acetyltransferase is responsible for the acetylation of loline to form N-acetylloline (NAL). LolA might interact with aspartate kinase to prevent feedback inhibition of its activity by these end products and thereby promote production of l-homoserine from l-aspartate. This Epichloe uncinata (Endophyte fungus) protein is FAD-binding monooxygenase lolF2.